The sequence spans 761 residues: MHRFLQPVRERLRSALARYFGSRIMSSTQWTPNMYPSARRSDHIDTYRSETRGEVKVPDPYHWLEEYSEETDKWTSDQEEFTRTYLDSNPDRKKLEDAFRKSMDYPKFSAPFLNDDKRWYWFYNTGLQAQTVICRSKDETLPDFSESDYVGETFFDPNLLSSDGTASLSMYDFSHCGKYFAYGISLSGSDFSTIYVRSTSSPLAPGNNSIRNDDGRLPDELRYVKFSSISWTKDSKGFFYQRYPGTGTVNGQNGIQTQGDRDAMIYYHRIGTSQSDDILVHEDQEHPDWVFGAEVTEDGKYVALYTMKDTSRKNLLWIADLGQNEVGRNMKWNKICNVFDSEYDLIGNDGSLLYIRTNKAAPQYKIVTLDIEKPELGFKEFIPEDPKAYLSQVKIFNKDRLALVYKRNVIGELYVYNNTGSRLMRLARDFVGSMTVTARETEPWFFATLTGFNTPGIVCRYNIQRPEEQRWSVYRTAKVKGLNPNDFEARQVWYDSYDGTKIPMFIVRHKNTQFNGTAPAIQYGYGGFNISINPFFSPTILTFLQKYGAILAVPNIRGGGEFGETWHDAGIREKRANVYDDFIAATQFLVKNKYAAGGKVAINGGSNGGLLVAACVNRAREGTFGAAIAEVGVLDLLKFPKFTIGKAWISDYGDPEDPRDFDYIYTHSPLHNIPKNMVLPPTMLLTADHDDRVVPMHSFKYAAMLQYTLPHNRHPLLLRVDKKAGHGGGKSTEKRLQEAADKWGFAAQSMGLAWKDRQANL.

Residues serine 606, aspartate 690, and histidine 726 each act as charge relay system in the active site.

The protein belongs to the peptidase S9A family. As to quaternary structure, monomer.

The catalysed reaction is Hydrolysis of Pro-|-Xaa &gt;&gt; Ala-|-Xaa in oligopeptides.. Housekeeping prolyl oligopeptidase (POP) that behaves like a conventional POP by cleaving peptide bonds on the C-terminal side of prolyl residues within peptides that are up to approximately 30 amino acids long. In Amanita bisporigera (Destroying angel), this protein is Prolyl oligopeptidase A.